The chain runs to 391 residues: Phosphoglycerate kinase (391 aa).

Substrate is bound by residues 21-23 (DFN), R41, 64-67 (HLGR), R121, and R154. Residues K205, E322, and 348 to 351 (GGDS) each bind ATP.

It belongs to the phosphoglycerate kinase family. Monomer.

It localises to the cytoplasm. The enzyme catalyses (2R)-3-phosphoglycerate + ATP = (2R)-3-phospho-glyceroyl phosphate + ADP. The protein operates within carbohydrate degradation; glycolysis; pyruvate from D-glyceraldehyde 3-phosphate: step 2/5. This is Phosphoglycerate kinase from Solibacter usitatus (strain Ellin6076).